We begin with the raw amino-acid sequence, 105 residues long: MKVHKGDTVLVIAGKDKGAKGKVIQAYPATNKVLVEGVNRIKKHTAVSANERGASSGGIVTQEAPIHVSNVAVVDSDGNPTRVGYRTDEESGKRVRISRKNGKDI.

The disordered stretch occupies residues 75–105 (DSDGNPTRVGYRTDEESGKRVRISRKNGKDI). Residues 94–105 (RVRISRKNGKDI) are compositionally biased toward basic residues.

The protein belongs to the universal ribosomal protein uL24 family. In terms of assembly, part of the 50S ribosomal subunit.

In terms of biological role, one of two assembly initiator proteins, it binds directly to the 5'-end of the 23S rRNA, where it nucleates assembly of the 50S subunit. One of the proteins that surrounds the polypeptide exit tunnel on the outside of the subunit. The protein is Large ribosomal subunit protein uL24 of Rhodococcus jostii (strain RHA1).